A 198-amino-acid chain; its full sequence is Proteasome subunit beta type-4 (198 aa).

Methionine 1 bears the N-acetylmethionine mark. Position 76 is a phosphoserine (serine 76).

The protein belongs to the peptidase T1B family. In terms of assembly, the 26S proteasome consists of a 20S proteasome core and two 19S regulatory subunits. The 20S proteasome core is composed of 28 subunits that are arranged in four stacked rings, resulting in a barrel-shaped structure. The two end rings are each formed by seven alpha subunits, and the two central rings are each formed by seven beta subunits. The catalytic chamber with the active sites is on the inside of the barrel.

Its subcellular location is the cytoplasm. The protein resides in the nucleus. Its function is as follows. Non-catalytic component of the proteasome which degrades poly-ubiquitinated proteins in the cytoplasm and in the nucleus. It is essential for the regulated turnover of proteins and for the removal of misfolded proteins. The proteasome is a multicatalytic proteinase complex that is characterized by its ability to cleave peptides with Arg, Phe, Tyr, Leu, and Glu adjacent to the leaving group at neutral or slightly basic pH. It has an ATP-dependent proteolytic activity. This subunit has a chymotrypsin-like activity. This Saccharomyces cerevisiae (strain ATCC 204508 / S288c) (Baker's yeast) protein is Proteasome subunit beta type-4 (PRE1).